Reading from the N-terminus, the 344-residue chain is tRNA (guanine(26)-N(2))-dimethyltransferase (344 aa).

The Trm1 methyltransferase domain occupies 1-334 (MIVREGSAEI…ASCDLVESLM (334 aa)). S-adenosyl-L-methionine contacts are provided by Arg35, Arg60, and Glu76.

This sequence belongs to the class I-like SAM-binding methyltransferase superfamily. Trm1 family.

It catalyses the reaction guanosine(26) in tRNA + 2 S-adenosyl-L-methionine = N(2)-dimethylguanosine(26) in tRNA + 2 S-adenosyl-L-homocysteine + 2 H(+). Its function is as follows. Dimethylates a single guanine residue at position 26 of a number of tRNAs using S-adenosyl-L-methionine as donor of the methyl groups. The chain is tRNA (guanine(26)-N(2))-dimethyltransferase from Thermoplasma acidophilum (strain ATCC 25905 / DSM 1728 / JCM 9062 / NBRC 15155 / AMRC-C165).